Reading from the N-terminus, the 102-residue chain is Ribonuclease P protein component 1 (102 aa).

It belongs to the eukaryotic/archaeal RNase P protein component 1 family. Consists of a catalytic RNA component and at least 4-5 protein subunits.

Its subcellular location is the cytoplasm. It catalyses the reaction Endonucleolytic cleavage of RNA, removing 5'-extranucleotides from tRNA precursor.. Functionally, part of ribonuclease P, a protein complex that generates mature tRNA molecules by cleaving their 5'-ends. The protein is Ribonuclease P protein component 1 of Archaeoglobus fulgidus (strain ATCC 49558 / DSM 4304 / JCM 9628 / NBRC 100126 / VC-16).